A 378-amino-acid chain; its full sequence is Plant intracellular Ras-group-related LRR protein 8 (378 aa).

In terms of domain architecture, Ubiquitin-like spans 10 to 86 (PTITVQVKFG…VMLMASQGLH (77 aa)). Positions 85–120 (LHQGDGPITKNSSVPAPSTRRASNVKEAQIQKSDTN) are disordered. Positions 93–106 (TKNSSVPAPSTRRA) are enriched in polar residues. 9 LRR repeats span residues 129-152 (WKAT…VWGC), 153-176 (GSSI…IAAL), 178-201 (SLQK…GLTC), 202-225 (VQTL…LGSI), 226-250 (THLR…LLKH), 252-271 (EILI…IGGC), 272-293 (ESLN…AFGN), 294-317 (LQHL…FFIK), and 319-344 (SQLI…GWEE).

This sequence belongs to the SHOC2 family. Widely expressed except in panicles.

Functionally, leucine-rich repeat protein that likely mediates protein interactions, possibly in the context of signal transduction. This chain is Plant intracellular Ras-group-related LRR protein 8 (IRL8), found in Oryza sativa subsp. japonica (Rice).